The primary structure comprises 216 residues: Transmembrane emp24 domain-containing protein eca (216 aa).

A signal peptide spans 1-20 (MRDQFISLALMLCILHSACG). The Lumenal portion of the chain corresponds to 21-182 (LYFHISETER…FRHTSESTNS (162 aa)). Residues 30–126 (RKCFIEEVPD…QLRVHLDIQV (97 aa)) enclose the GOLD domain. Positions 134 to 164 (ANVAQKEKLTELQLRIRQLLDQVEQITKEQN) form a coiled coil. A helical membrane pass occupies residues 183-203 (RVLWWSLAQTVVLVCMGFWQM). At 204–216 (RHLKSFFEAKKLV) the chain is on the cytoplasmic side. The short motif at 213-216 (KKLV) is the Prevents secretion from ER element.

It belongs to the EMP24/GP25L family.

It is found in the endoplasmic reticulum membrane. Its function is as follows. Eca and bai are essential, though not redundant, for dorsoventral patterning of the embryo. Specifically required during early embryogenesis for the activity of maternal tkv, while the zygotic tkv is not affected. Involved in Golgi organization. This Drosophila erecta (Fruit fly) protein is Transmembrane emp24 domain-containing protein eca.